A 90-amino-acid chain; its full sequence is Small ribosomal subunit protein uS15 (90 aa).

This sequence belongs to the universal ribosomal protein uS15 family. As to quaternary structure, part of the 30S ribosomal subunit. Forms a bridge to the 50S subunit in the 70S ribosome, contacting the 23S rRNA.

One of the primary rRNA binding proteins, it binds directly to 16S rRNA where it helps nucleate assembly of the platform of the 30S subunit by binding and bridging several RNA helices of the 16S rRNA. Its function is as follows. Forms an intersubunit bridge (bridge B4) with the 23S rRNA of the 50S subunit in the ribosome. The protein is Small ribosomal subunit protein uS15 of Mycoplasmoides gallisepticum (strain R(low / passage 15 / clone 2)) (Mycoplasma gallisepticum).